A 253-amino-acid chain; its full sequence is Imidazole glycerol phosphate synthase subunit HisF (253 aa).

Residues Asp-12 and Asp-131 contribute to the active site.

This sequence belongs to the HisA/HisF family. Heterodimer of HisH and HisF.

The protein resides in the cytoplasm. It carries out the reaction 5-[(5-phospho-1-deoxy-D-ribulos-1-ylimino)methylamino]-1-(5-phospho-beta-D-ribosyl)imidazole-4-carboxamide + L-glutamine = D-erythro-1-(imidazol-4-yl)glycerol 3-phosphate + 5-amino-1-(5-phospho-beta-D-ribosyl)imidazole-4-carboxamide + L-glutamate + H(+). The protein operates within amino-acid biosynthesis; L-histidine biosynthesis; L-histidine from 5-phospho-alpha-D-ribose 1-diphosphate: step 5/9. In terms of biological role, IGPS catalyzes the conversion of PRFAR and glutamine to IGP, AICAR and glutamate. The HisF subunit catalyzes the cyclization activity that produces IGP and AICAR from PRFAR using the ammonia provided by the HisH subunit. This is Imidazole glycerol phosphate synthase subunit HisF from Corynebacterium urealyticum (strain ATCC 43042 / DSM 7109).